The chain runs to 112 residues: T cell receptor alpha variable 12-1 (112 aa).

Positions 1-20 (MISLRVLLVILWLQLSWVWS) are cleaved as a signal peptide. The 90-residue stretch at 23–112 (KEVEQDPGPF…DSATYLCVVN (90 aa)) folds into the Ig-like domain. N-linked (GlcNAc...) asparagine glycosylation is present at Asn-43. Cys-44 and Cys-109 are oxidised to a cystine.

In terms of assembly, alpha-beta TR is a heterodimer composed of an alpha and beta chain; disulfide-linked. The alpha-beta TR is associated with the transmembrane signaling CD3 coreceptor proteins to form the TR-CD3 (TcR or TCR). The assembly of alpha-beta TR heterodimers with CD3 occurs in the endoplasmic reticulum where a single alpha-beta TR heterodimer associates with one CD3D-CD3E heterodimer, one CD3G-CD3E heterodimer and one CD247 homodimer forming a stable octameric structure. CD3D-CD3E and CD3G-CD3E heterodimers preferentially associate with TR alpha and TR beta chains, respectively. The association of the CD247 homodimer is the last step of TcR assembly in the endoplasmic reticulum and is required for transport to the cell surface.

The protein resides in the cell membrane. Its function is as follows. V region of the variable domain of T cell receptor (TR) alpha chain that participates in the antigen recognition. Alpha-beta T cell receptors are antigen specific receptors which are essential to the immune response and are present on the cell surface of T lymphocytes. Recognize peptide-major histocompatibility (MH) (pMH) complexes that are displayed by antigen presenting cells (APC), a prerequisite for efficient T cell adaptive immunity against pathogens. Binding of alpha-beta TR to pMH complex initiates TR-CD3 clustering on the cell surface and intracellular activation of LCK that phosphorylates the ITAM motifs of CD3G, CD3D, CD3E and CD247 enabling the recruitment of ZAP70. In turn ZAP70 phosphorylates LAT, which recruits numerous signaling molecules to form the LAT signalosome. The LAT signalosome propagates signal branching to three major signaling pathways, the calcium, the mitogen-activated protein kinase (MAPK) kinase and the nuclear factor NF-kappa-B (NF-kB) pathways, leading to the mobilization of transcription factors that are critical for gene expression and essential for T cell growth and differentiation. The T cell repertoire is generated in the thymus, by V-(D)-J rearrangement. This repertoire is then shaped by intrathymic selection events to generate a peripheral T cell pool of self-MH restricted, non-autoaggressive T cells. Post-thymic interaction of alpha-beta TR with the pMH complexes shapes TR structural and functional avidity. This is T cell receptor alpha variable 12-1 from Homo sapiens (Human).